Reading from the N-terminus, the 141-residue chain is MAKKVIKMVKLQIPAGKANPAPPVGPALGQAGVNIMGFCKEFNARTSDQAGLIIPVEITVFEDRSFTFVTKTPPAAVLLKKAAGIESGSGEPNRNKVATVKRDKVREIAETKMPDLNAADVEAAMRMVEGTARSMGIVIED.

It belongs to the universal ribosomal protein uL11 family. As to quaternary structure, part of the ribosomal stalk of the 50S ribosomal subunit. Interacts with L10 and the large rRNA to form the base of the stalk. L10 forms an elongated spine to which L12 dimers bind in a sequential fashion forming a multimeric L10(L12)X complex. In terms of processing, one or more lysine residues are methylated.

Forms part of the ribosomal stalk which helps the ribosome interact with GTP-bound translation factors. In Halalkalibacterium halodurans (strain ATCC BAA-125 / DSM 18197 / FERM 7344 / JCM 9153 / C-125) (Bacillus halodurans), this protein is Large ribosomal subunit protein uL11A.